The following is a 734-amino-acid chain: Ribosomal RNA large subunit methyltransferase K/L (734 aa).

The region spanning 49 to 167 (HAYRICMWSR…KTEHTYCLDL (119 aa)) is the THUMP domain.

This sequence belongs to the methyltransferase superfamily. RlmKL family.

The protein localises to the cytoplasm. It carries out the reaction guanosine(2445) in 23S rRNA + S-adenosyl-L-methionine = N(2)-methylguanosine(2445) in 23S rRNA + S-adenosyl-L-homocysteine + H(+). The enzyme catalyses guanosine(2069) in 23S rRNA + S-adenosyl-L-methionine = N(2)-methylguanosine(2069) in 23S rRNA + S-adenosyl-L-homocysteine + H(+). Its function is as follows. Specifically methylates the guanine in position 2445 (m2G2445) and the guanine in position 2069 (m7G2069) of 23S rRNA. The chain is Ribosomal RNA large subunit methyltransferase K/L from Acinetobacter baumannii (strain SDF).